Consider the following 342-residue polypeptide: Protein FinQ (342 aa).

Positions R208–S227 form a DNA-binding region, H-T-H motif.

Its function is as follows. Transcriptional inhibitor of the F plasmid transfer genes. FinQ may regulate a gene or genes encoded on the IncI plasmids, and coincidentally may inhibit F transfer when coresident. In Escherichia coli, this protein is Protein FinQ (finQ).